Reading from the N-terminus, the 702-residue chain is Solute carrier organic anion transporter family member 1B3 (702 aa).

Over 1–28 (MDQHQHLNKTAESASSEKKKTRRCNGFK) the chain is Cytoplasmic. A helical membrane pass occupies residues 29 to 48 (MFLAALSFSYIAKALGGIIM). The Extracellular segment spans residues 49 to 67 (KISITQIERRFDISSSLAG). The chain crosses the membrane as a helical span at residues 68–88 (LIDGSFEIGNLLVIVFVSYFG). The Cytoplasmic portion of the chain corresponds to 89–94 (SKLHRP). The helical transmembrane segment at 95 to 119 (KLIGIGCLLMGTGSILTSLPHFFMG) threads the bilayer. The Extracellular portion of the chain corresponds to 120–168 (YYRYSKETHINPSENSTSSLSTCLINQTLSFNGTSPEIVEKDCVKESGS). N-linked (GlcNAc...) asparagine glycans are attached at residues Asn-134, Asn-145, and Asn-151. A helical transmembrane segment spans residues 169-197 (HMWIYVFMGNMLRGIGETPIVPLGISYID). The Cytoplasmic portion of the chain corresponds to 198–216 (DFAKEGHSSLYLGSLNAIG). A helical membrane pass occupies residues 217–237 (MIGPVIGFALGSLFAKMYVDI). The Extracellular segment spans residues 238 to 255 (GYVDLSTIRITPKDSRWV). Residues 256–280 (GAWWLGFLVSGLFSIISSIPFFFLP) traverse the membrane as a helical segment. Over 281 to 331 (KNPNKPQKERKISLSLHVLKTNDDRNQTANLTNQGKNVTKNVTGFFQSLKS) the chain is Cytoplasmic. A phosphoserine mark is found at Ser-293 and Ser-295. A helical transmembrane segment spans residues 332–353 (ILTNPLYVIFLLLTLLQVSSFI). At 354–373 (GSFTYVFKYMEQQYGQSASH) the chain is on the extracellular side. The chain crosses the membrane as a helical span at residues 374–397 (ANFLLGIITIPTVATGMFLGGFII). The Cytoplasmic segment spans residues 398-401 (KKFK). A helical membrane pass occupies residues 402–425 (LSLVGIAKFSFLTSMISFLFQLLY). The Extracellular segment spans residues 426-537 (FPLICESKSV…NTCTRKFFIY (112 aa)). Asn-445 is a glycosylation site (N-linked (GlcNAc...) asparagine). The 56-residue stretch at 453-508 (DVPLSYCNSECNCDESQWEPVCGNNGITYLSPCLAGCKSSSGIKKHTVFYNCSCVE) folds into the Kazal-like domain. Intrachain disulfides connect Cys-459-Cys-489, Cys-465-Cys-485, and Cys-474-Cys-506. N-linked (GlcNAc...) asparagine glycosylation is found at Asn-503 and Asn-516. Residues 538–560 (VAIQVINSLFSATGGTTFILLTV) form a helical membrane-spanning segment. Topologically, residues 561-569 (KIVQPELKA) are cytoplasmic. A helical membrane pass occupies residues 570-595 (LAMGFQSMVIRTLGGILAPIYFGALI). The Extracellular segment spans residues 596-629 (DKTCMKWSTNSCGAQGACRIYNSVFFGRVYLGLS). A helical membrane pass occupies residues 630–647 (IALRFPALVLYIVFIFAM). Topologically, residues 648–695 (KKKFQGKDTKASDNERKVMDEANLEFLNNGEHFVPSAGTDSKTCNLDM) are cytoplasmic. Residue Ser-683 is modified to Phosphoserine.

It belongs to the organo anion transporter (TC 2.A.60) family. In terms of processing, N-glycosylated. In terms of tissue distribution, highly expressed in liver, in particular at the basolateral membrane of hepatocytes near the central vein. Expressed in the placenta. In testis, primarily localized to the basal membrane of Sertoli cells and weakly expressed in Leydig cells and within the tubules.

It is found in the basolateral cell membrane. Its subcellular location is the basal cell membrane. It carries out the reaction estrone 3-sulfate(out) + hydrogencarbonate(in) = estrone 3-sulfate(in) + hydrogencarbonate(out). The enzyme catalyses 17beta-estradiol 17-O-(beta-D-glucuronate)(out) = 17beta-estradiol 17-O-(beta-D-glucuronate)(in). The catalysed reaction is taurocholate(out) = taurocholate(in). It catalyses the reaction estrone 3-sulfate(out) = estrone 3-sulfate(in). It carries out the reaction dehydroepiandrosterone 3-sulfate(out) = dehydroepiandrosterone 3-sulfate(in). The enzyme catalyses leukotriene C4(out) = leukotriene C4(in). The catalysed reaction is L-thyroxine(out) = L-thyroxine(in). It catalyses the reaction prostaglandin E2(out) = prostaglandin E2(in). It carries out the reaction (4E,15E)-bilirubin IXalpha C8-beta-D-glucuronoside(out) = (4E,15E)-bilirubin IXalpha C8-beta-D-glucuronoside(in). The enzyme catalyses bilirubin IXalpha bis-beta-D-glucuronoside(out) = bilirubin IXalpha bis-beta-D-glucuronoside(in). Functionally, mediates the Na(+)-independent uptake of organic anions. Shows broad substrate specificity, can transport both organic anions such as bile acid taurocholate (cholyltaurine) and conjugated steroids (17-beta-glucuronosyl estradiol, dehydroepiandrosterone sulfate (DHEAS), and estrone 3-sulfate), as well as eicosanoid leukotriene C4, prostaglandin E2 and L-thyroxine (T4). Hydrogencarbonate/HCO3(-) acts as the probable counteranion that exchanges for organic anions. Shows a pH-sensitive substrate specificity towards sulfated steroids, taurocholate and T4 which may be ascribed to the protonation state of the binding site and leads to a stimulation of substrate transport in an acidic microenvironment. Involved in the clearance of bile acids and organic anions from the liver. Can take up bilirubin glucuronides from plasma into the liver, contributing to the detoxification-enhancing liver-blood shuttling loop. Transports coproporphyrin I and III, by-products of heme synthesis, and may be involved in their hepatic disposition. May contribute to regulate the transport of organic compounds in testes across the blood-testis-barrier. Can transport HMG-CoA reductase inhibitors (also known as statins) such as pitavastatin, a clinically important class of hypolipidemic drugs. May play an important role in plasma and tissue distribution of the structurally diverse chemotherapeutic drugs methotrexate and paclitaxel. May also transport antihypertension agents, such as the angiotensin-converting enzyme (ACE) inhibitor prodrug enalapril, and the highly selective angiotensin II AT1-receptor antagonist valsartan, in the liver. In Homo sapiens (Human), this protein is Solute carrier organic anion transporter family member 1B3 (SLCO1B3).